The sequence spans 501 residues: Probable Xaa-Pro aminopeptidase pepP (501 aa).

The tract at residues 1–25 (MNYHSFLPLRRSSLSHSTTPPSKSR) is disordered. Polar residues predominate over residues 12–25 (SSLSHSTTPPSKSR). Mn(2+)-binding residues include D298, D309, E432, and E472.

It belongs to the peptidase M24B family. It depends on Mn(2+) as a cofactor.

It carries out the reaction Release of any N-terminal amino acid, including proline, that is linked to proline, even from a dipeptide or tripeptide.. Its function is as follows. Catalyzes the removal of a penultimate prolyl residue from the N-termini of peptides. The sequence is that of Probable Xaa-Pro aminopeptidase pepP (pepP) from Metarhizium acridum (strain CQMa 102).